The following is a 678-amino-acid chain: Secretin ExeD (678 aa).

The signal sequence occupies residues 1-25 (MINKGKGWRLATVAAALMMAGSAWA). Residues 26–122 (TEYSASFKNA…VVDETNPGIG (97 aa)) form an N0 region. An N1 region spans residues 124-188 (EMVTRVVPVR…EVVRRVDKAG (65 aa)). The interval 189–264 (DQEVDIIKLK…MVRQLDRDLQ (76 aa)) is N2. The segment at 267–348 (GNTRVFYLKY…ELEQVVAKLD (82 aa)) is N3. The tract at residues 353–602 (QVLVEAIIVE…VFIRPTILRD (250 aa)) is secretin. Residues 604-678 (NVYSGISSNK…GVQPFVQGNK (75 aa)) are s domain.

It belongs to the bacterial secretin family. GSP D subfamily. As to quaternary structure, forms a cylindrical channel with 15 subunits.

The protein localises to the cell outer membrane. Involved in a type II secretion system (T2SS, formerly general secretion pathway, GSP) for the export of proteins. This subunit forms the outer membrane channel. This is Secretin ExeD (exeD) from Aeromonas hydrophila.